We begin with the raw amino-acid sequence, 204 residues long: Holliday junction branch migration complex subunit RuvA (204 aa).

The tract at residues 1–64 (MIGKLKGTLE…EEAIRLFGFA (64 aa)) is domain I. The tract at residues 65-143 (TRAEQEWFCM…PFEQAVKTVS (79 aa)) is domain II. Residues 144-154 (VPQREITHQPA) are flexible linker. Residues 154–204 (AHDALSALMKLGFEREQAARALALAMNALEGEAVSSALLIRHSLKLLSSPT) form a domain III region.

Belongs to the RuvA family. Homotetramer. Forms an RuvA(8)-RuvB(12)-Holliday junction (HJ) complex. HJ DNA is sandwiched between 2 RuvA tetramers; dsDNA enters through RuvA and exits via RuvB. An RuvB hexamer assembles on each DNA strand where it exits the tetramer. Each RuvB hexamer is contacted by two RuvA subunits (via domain III) on 2 adjacent RuvB subunits; this complex drives branch migration. In the full resolvosome a probable DNA-RuvA(4)-RuvB(12)-RuvC(2) complex forms which resolves the HJ.

The protein resides in the cytoplasm. Functionally, the RuvA-RuvB-RuvC complex processes Holliday junction (HJ) DNA during genetic recombination and DNA repair, while the RuvA-RuvB complex plays an important role in the rescue of blocked DNA replication forks via replication fork reversal (RFR). RuvA specifically binds to HJ cruciform DNA, conferring on it an open structure. The RuvB hexamer acts as an ATP-dependent pump, pulling dsDNA into and through the RuvAB complex. HJ branch migration allows RuvC to scan DNA until it finds its consensus sequence, where it cleaves and resolves the cruciform DNA. This Bartonella tribocorum (strain CIP 105476 / IBS 506) protein is Holliday junction branch migration complex subunit RuvA.